A 137-amino-acid polypeptide reads, in one-letter code: Large ribosomal subunit protein uL16 (137 aa).

This sequence belongs to the universal ribosomal protein uL16 family. In terms of assembly, part of the 50S ribosomal subunit.

Binds 23S rRNA and is also seen to make contacts with the A and possibly P site tRNAs. This chain is Large ribosomal subunit protein uL16, found in Streptococcus equi subsp. zooepidemicus (strain H70).